We begin with the raw amino-acid sequence, 600 residues long: Putative fucosyltransferase R654 (600 aa).

This sequence belongs to the glycosyltransferase 10 family.

In Acanthamoeba polyphaga mimivirus (APMV), this protein is Putative fucosyltransferase R654.